The primary structure comprises 561 residues: Delta(24)-sterol reductase (561 aa).

The Lumenal segment spans residues 1–25 (MSDLQTPLVRPKRKKTWVDYFVKFR). S2 bears the Phosphoserine mark. A helical; Signal-anchor transmembrane segment spans residues 26–46 (WIIVIFIVLPFSATFYFLIYL). Topologically, residues 47 to 561 (GDMWSESKSF…HLETAYAEAD (515 aa)) are cytoplasmic. The FAD-binding PCMH-type domain occupies 49-232 (MWSESKSFEK…VAAEIRLIKV (184 aa)). An interaction with calmodulin region spans residues 518 to 539 (CRKKYRAIGTFMSVYYKSKKGR).

Belongs to the DIMINUTO family. Interacts with calmodulin.

Its subcellular location is the microsome membrane. The enzyme catalyses lathosterol + NADP(+) = 5alpha-cholesta-7,24-dien-3beta-ol + NADPH + H(+). Functionally, plays a critical role in the general process of plant cell elongation. Involved in the synthesis of campesterol, an early precursor of brassinolide. Required for the conversion of 24-methylenecholesterol to campesterol and for the conversion of isofucosterol to sitosterol. Necessary for both the isomerization and reduction of 24-methylenecholesterol. Regulates indirectly phytochrome-mediated light responses through the modulation of brassinosteroid biosynthesis. The protein is Delta(24)-sterol reductase (DIM) of Arabidopsis thaliana (Mouse-ear cress).